We begin with the raw amino-acid sequence, 345 residues long: tRNA dimethylallyltransferase (345 aa).

Residue 9 to 16 participates in ATP binding; the sequence is GPTASGKS. 11–16 is a binding site for substrate; that stretch reads TASGKS. Interaction with substrate tRNA regions lie at residues 34–37 and 195–199; these read DSMQ and QRMIR.

The protein belongs to the IPP transferase family. In terms of assembly, monomer. Mg(2+) is required as a cofactor.

The catalysed reaction is adenosine(37) in tRNA + dimethylallyl diphosphate = N(6)-dimethylallyladenosine(37) in tRNA + diphosphate. In terms of biological role, catalyzes the transfer of a dimethylallyl group onto the adenine at position 37 in tRNAs that read codons beginning with uridine, leading to the formation of N6-(dimethylallyl)adenosine (i(6)A). In Orientia tsutsugamushi (strain Ikeda) (Rickettsia tsutsugamushi), this protein is tRNA dimethylallyltransferase.